Reading from the N-terminus, the 57-residue chain is DNA gyrase inhibitor YacG (57 aa).

Zn(2+) is bound by residues Cys5, Cys8, Cys20, and Cys24.

Belongs to the DNA gyrase inhibitor YacG family. In terms of assembly, interacts with GyrB. The cofactor is Zn(2+).

Its function is as follows. Inhibits all the catalytic activities of DNA gyrase by preventing its interaction with DNA. Acts by binding directly to the C-terminal domain of GyrB, which probably disrupts DNA binding by the gyrase. The chain is DNA gyrase inhibitor YacG from Caulobacter vibrioides (strain ATCC 19089 / CIP 103742 / CB 15) (Caulobacter crescentus).